Here is a 398-residue protein sequence, read N- to C-terminus: Acetate kinase (398 aa).

Residue Asn8 coordinates Mg(2+). Lys15 lines the ATP pocket. Arg89 provides a ligand contact to substrate. Catalysis depends on Asp146, which acts as the Proton donor/acceptor. Residues 206–210 (HIGNG), 283–285 (DMR), and 331–335 (GMGEN) each bind ATP. Glu383 provides a ligand contact to Mg(2+).

It belongs to the acetokinase family. In terms of assembly, homodimer. Mg(2+) serves as cofactor. The cofactor is Mn(2+).

Its subcellular location is the cytoplasm. It carries out the reaction acetate + ATP = acetyl phosphate + ADP. It functions in the pathway metabolic intermediate biosynthesis; acetyl-CoA biosynthesis; acetyl-CoA from acetate: step 1/2. Catalyzes the formation of acetyl phosphate from acetate and ATP. Can also catalyze the reverse reaction. This is Acetate kinase from Streptococcus pyogenes serotype M2 (strain MGAS10270).